Here is a 389-residue protein sequence, read N- to C-terminus: Probable protein phosphatase 2C 12 (389 aa).

One can recognise a PPM-type phosphatase domain in the interval 42–356; that stretch reads VASLFSQRGK…DDCSAVCLFL (315 aa). Mn(2+) contacts are provided by D77 and G78. The tract at residues 119–145 is disordered; it reads AFSDDAAASSSADSSGNSSPQPSASAS. A compositionally biased stretch (low complexity) spans 121–145; the sequence is SDDAAASSSADSSGNSSPQPSASAS. 2 residues coordinate Mn(2+): D301 and D347.

This sequence belongs to the PP2C family. Mg(2+) is required as a cofactor. The cofactor is Mn(2+).

The enzyme catalyses O-phospho-L-seryl-[protein] + H2O = L-seryl-[protein] + phosphate. It carries out the reaction O-phospho-L-threonyl-[protein] + H2O = L-threonyl-[protein] + phosphate. In Oryza sativa subsp. japonica (Rice), this protein is Probable protein phosphatase 2C 12.